A 127-amino-acid polypeptide reads, in one-letter code: Glycine cleavage system H protein 1 (127 aa).

The region spanning 20–101 is the Lipoyl-binding domain; it reads SVTVGITPYA…LGAGWFFRFI (82 aa). Lys-60 is modified (N6-lipoyllysine).

The protein belongs to the GcvH family. As to quaternary structure, the glycine cleavage system is composed of four proteins: P, T, L and H. (R)-lipoate serves as cofactor.

In terms of biological role, the glycine cleavage system catalyzes the degradation of glycine. The H protein shuttles the methylamine group of glycine from the P protein to the T protein. The chain is Glycine cleavage system H protein 1 from Pseudomonas syringae pv. tomato (strain ATCC BAA-871 / DC3000).